Reading from the N-terminus, the 302-residue chain is N-acetyl-D-glucosamine kinase (302 aa).

ATP contacts are provided by residues 4-11 (GFDIGGTK) and 133-139 (GGGGLVL). Zn(2+) contacts are provided by His-156, Cys-176, Cys-178, and Cys-183.

The protein belongs to the ROK (NagC/XylR) family. NagK subfamily.

It catalyses the reaction N-acetyl-D-glucosamine + ATP = N-acetyl-D-glucosamine 6-phosphate + ADP + H(+). It functions in the pathway cell wall biogenesis; peptidoglycan recycling. Catalyzes the phosphorylation of N-acetyl-D-glucosamine (GlcNAc) derived from cell-wall degradation, yielding GlcNAc-6-P. The protein is N-acetyl-D-glucosamine kinase of Salmonella typhi.